The following is a 59-amino-acid chain: Cecropin-A1 (59 aa).

An N-terminal signal peptide occupies residues 1 to 23; sequence MNFTKLFAIVLLAALVLLGQTEA.

It belongs to the cecropin family.

The protein resides in the secreted. In terms of biological role, cecropins have lytic and antibacterial activity against several Gram-positive and Gram-negative bacteria. This chain is Cecropin-A1 (CECA1), found in Aedes albopictus (Asian tiger mosquito).